The chain runs to 219 residues: Cytidylate kinase (219 aa).

Position 11–19 (11–19) interacts with ATP; sequence GPAGVGKTT.

This sequence belongs to the cytidylate kinase family. Type 1 subfamily.

Its subcellular location is the cytoplasm. The catalysed reaction is CMP + ATP = CDP + ADP. The enzyme catalyses dCMP + ATP = dCDP + ADP. This Oleidesulfovibrio alaskensis (strain ATCC BAA-1058 / DSM 17464 / G20) (Desulfovibrio alaskensis) protein is Cytidylate kinase.